Reading from the N-terminus, the 329-residue chain is Beta-ribofuranosylphenol 5'-phosphate synthase (329 aa).

The protein belongs to the beta-RFA-P synthase family. In terms of assembly, homodimer. Mg(2+) serves as cofactor.

The enzyme catalyses 5-phospho-alpha-D-ribose 1-diphosphate + 4-hydroxybenzoate + H(+) = 4-(beta-D-ribofuranosyl)phenol 5'-phosphate + CO2 + diphosphate. The catalysed reaction is 4-aminobenzoate + 5-phospho-alpha-D-ribose 1-diphosphate + H(+) = 4-(beta-D-ribofuranosyl)aminobenzene 5'-phosphate + CO2 + diphosphate. It participates in cofactor biosynthesis; 5,6,7,8-tetrahydromethanopterin biosynthesis. Catalyzes the condensation of 4-hydroxybenzoate (HB) with 5-phospho-alpha-D-ribose 1-diphosphate (PRPP) to produce beta-ribofuranosylphenol 5'-phosphate (beta-RFH-P). Also catalyzes the condensation of 4-aminobenzoate (pABA) with PRPP to produce beta-ribofuranosylaminobenzene 5'-phosphate (beta-RFA-P). Only 4-hydroxybenzoate is known to be biosynthesized by methanogenic archaea, but 4-aminobenzoate can be used as substrate by growing methanogens when it is present in the growth medium. The sequence is that of Beta-ribofuranosylphenol 5'-phosphate synthase from Methanothermobacter thermautotrophicus (strain ATCC 29096 / DSM 1053 / JCM 10044 / NBRC 100330 / Delta H) (Methanobacterium thermoautotrophicum).